Consider the following 379-residue polypeptide: MPGVAKRKYVGETMRINKNLSQVLRRLSDVLPYNYNAETLLELFQQLYPHEWRELNQRFDQYKEKDEFLLKKGKKIRYKPNPPKEHFFKLPIVKNILSKGRIAKHNANFDELAYQERFAKFKAKRENAIRSRNEKIAKANELIQNVEPLFIDTFIAAYHKRGISFDEKMEIFKELQKYKSKKTAEFFYKLSESERNNQIRNMAFKHLQVTGNYVKLRKNFNGKKKEYMTESSEFFMTPLDLLKRIESNNVQNKKVYDVFISHSYKDSSVIKKIIKAFNKLSISIYCDWTSDSDFLKRELVSEYTKVVLKKRIEQSKNIVFVKTDNSLESHWVRFELDYSRELGKTLFCINLSDEAEGECNVLQFDVKNETISWTTGLVK.

The TIR domain occupies 254–379 (KVYDVFISHS…TISWTTGLVK (126 aa)). Glu-335 is an active-site residue.

As to quaternary structure, homodimer.

The protein localises to the cytoplasm. Activated upon phage infection. Functionally, one of 2 TIR-like protein components of the Thoeris antiviral defense system, composed of ThsA, TIR1 (thsB1) and TIR2 (thsB2). Phage infection activates this protein; by 70 minutes post-infection with phage SPO1, TIR2 generates a signal molecule that in turn activates the NAD(+) hydrolase activity of ThsA (tested with B.cereus). The signal is similar to cyclic ADP-D-ribose, but how it differs is unknown. Expression of Thoeris in B.subtilis (strain BEST7003) confers resistance to phages phi29, phi3T, SPBeta, SBSphi11, SBSphi13, SBSphiJ, SPO1 and SPR but not SBSphiC. The TIR paralogs confer resistance to different phages; this subunit confers resistance to phi3T, SPBeta, SBSphi13, SBSphiJ, SPO1 and SPR but not phi29, SBSphi11 or SBSphiC. There is overlap in the phage range for this system, both TIR1 and TIR2 are activated by SBSphi13, SBSphiJ, SPO1 and SPR. Probably hydrolyzes NAD(+) to make a cyclic ADP-D-ribose (cADPR) signaling molecule; might make 3'cADPR. This is Putative cyclic ADP-D-ribose synthase TIR2 from Cytobacillus dafuensis (Bacillus dafuensis).